We begin with the raw amino-acid sequence, 404 residues long: Trigger factor (404 aa).

A PPIase FKBP-type domain is found at 160-225 (KDHLFVRTEE…VLEVKTLKLP (66 aa)).

It belongs to the FKBP-type PPIase family. Tig subfamily.

The protein localises to the cytoplasm. It catalyses the reaction [protein]-peptidylproline (omega=180) = [protein]-peptidylproline (omega=0). Involved in protein export. Acts as a chaperone by maintaining the newly synthesized protein in an open conformation. Functions as a peptidyl-prolyl cis-trans isomerase. The sequence is that of Trigger factor from Thermus thermophilus (strain ATCC BAA-163 / DSM 7039 / HB27).